We begin with the raw amino-acid sequence, 618 residues long: Proline--tRNA ligase (618 aa).

This sequence belongs to the class-II aminoacyl-tRNA synthetase family. ProS type 1 subfamily. As to quaternary structure, homodimer.

The protein resides in the cytoplasm. It carries out the reaction tRNA(Pro) + L-proline + ATP = L-prolyl-tRNA(Pro) + AMP + diphosphate. Functionally, catalyzes the attachment of proline to tRNA(Pro) in a two-step reaction: proline is first activated by ATP to form Pro-AMP and then transferred to the acceptor end of tRNA(Pro). As ProRS can inadvertently accommodate and process non-cognate amino acids such as alanine and cysteine, to avoid such errors it has two additional distinct editing activities against alanine. One activity is designated as 'pretransfer' editing and involves the tRNA(Pro)-independent hydrolysis of activated Ala-AMP. The other activity is designated 'posttransfer' editing and involves deacylation of mischarged Ala-tRNA(Pro). The misacylated Cys-tRNA(Pro) is not edited by ProRS. The protein is Proline--tRNA ligase of Streptococcus pyogenes serotype M4 (strain MGAS10750).